Here is a 437-residue protein sequence, read N- to C-terminus: GTPase Obg (437 aa).

Positions 2 to 160 (SMFLDTAKIS…RQLELELKIL (159 aa)) constitute an Obg domain. The OBG-type G domain maps to 161–338 (ADVGLVGFPS…LLEATAELLA (178 aa)). Residues 167–174 (GFPSVGKS), 192–196 (FTTIV), 214–217 (DLPG), 284–287 (NKMD), and 319–321 (SSL) each bind GTP. Ser174 and Thr194 together coordinate Mg(2+). An OCT domain is found at 359 to 437 (GFAETEKDFE…IGKFEFEFVD (79 aa)).

Belongs to the TRAFAC class OBG-HflX-like GTPase superfamily. OBG GTPase family. As to quaternary structure, monomer. The cofactor is Mg(2+).

Its subcellular location is the cytoplasm. Functionally, an essential GTPase which binds GTP, GDP and possibly (p)ppGpp with moderate affinity, with high nucleotide exchange rates and a fairly low GTP hydrolysis rate. Plays a role in control of the cell cycle, stress response, ribosome biogenesis and in those bacteria that undergo differentiation, in morphogenesis control. In Streptococcus pyogenes serotype M5 (strain Manfredo), this protein is GTPase Obg.